The following is a 2324-amino-acid chain: Myomegalin (2324 aa).

Coiled coils occupy residues 41–132 (REDV…LVEA), 158–205 (QVKL…LLEE), 238–288 (DSHL…SLKE), and 348–638 (LFCS…NKQA). Disordered stretches follow at residues 72–96 (TWAD…EPQQ) and 205–240 (EPGG…SDSH). The segment covering 85 to 96 (AELRRQVEEPQQ) has biased composition (basic and acidic residues). A compositionally biased stretch (polar residues) spans 219–238 (PTQQKPDLNETPTTQPSVSD). The tract at residues 701-747 (PAGATSVGPHHGEQTDQGSTQMPSRDDSTSLTAREEASIPRSTLGDS) is disordered. Thr-705 is modified (phosphothreonine). A compositionally biased stretch (basic and acidic residues) spans 724 to 738 (SRDDSTSLTAREEAS). Coiled coils occupy residues 745–822 (GDSD…QLVD), 855–923 (ENRR…EEVL), and 1011–1043 (LRAE…GFSS). Disordered stretches follow at residues 1155 to 1182 (LPSS…SLKL) and 1195 to 1216 (NKSQ…STKH). Coiled-coil stretches lie at residues 1213–1241 (STKH…SEAT), 1346–1384 (TSDD…LSAT), and 1430–1455 (GLQA…PKTG). Disordered stretches follow at residues 1540–1559 (TDRL…KEEA), 1589–1610 (RFSS…SSTS), 1628–1685 (YTHY…IPKP), 1742–1773 (APPT…SPAR), 1857–1877 (LSST…GLES), and 2081–2140 (NQQP…TPPK). In terms of domain architecture, Olduvai spans 1550–1641 (KDHKSEKEEA…EEKKPSPSNS (92 aa)). 2 stretches are compositionally biased toward low complexity: residues 1591–1610 (SSPP…SSTS) and 1637–1646 (SPSNSAASAS). A compositionally biased stretch (polar residues) spans 1743 to 1767 (PPTSTSTLLSNHTEASSPRYSNPAQ). Residues 1821 to 2056 (GADLLEEHLG…LRLQLEQQMD (236 aa)) adopt a coiled-coil conformation. 2 stretches are compositionally biased toward polar residues: residues 2081 to 2090 (NQQPPFQGSA) and 2108 to 2135 (PSNS…SAAT). Residues 2248–2274 (EEGNLMEKELLDLRAQVSQQQQLLQST) are a coiled coil.

As to quaternary structure, interacts with PDE4D. May interact with MAPRE1 and MAPRE3. May form a pericentrosomal complex with AKAP9, CDK5RAP2 and EB1/MAPRE1 in an isoform-specific manner; within this complex, may mediate MAPRE1-binding to CDK5RAP2. Interaction with AKAP9 stabilizes both proteins. May interact with CAMSAP2 in an isoform-specific manner; this interaction is much stronger in the presence of AKAP9. In complex with AKAP9, recruits CAMSAP2 to the Golgi apparatus. May interact with unglycosylated LGALS3BP in an isoform-specific manner; this interaction may connect the pericentrosomal complex to the gamma-tubulin ring complex (gamma-TuRC) to promote microtubule assembly and acetylation. As to expression, abundantly expressed in heart and skeletal muscle and to a lower extent in brain, lung and liver. Expressed in heart, skeletal muscle and testis (at protein level).

The protein localises to the cytoplasm. It is found in the cytoskeleton. The protein resides in the microtubule organizing center. It localises to the centrosome. Its subcellular location is the golgi apparatus. In terms of biological role, functions as an anchor sequestering components of the cAMP-dependent pathway to Golgi and/or centrosomes. May participate in microtubule dynamics, promoting microtubule assembly, in an isoform-specific manner. Depending upon the cell context, may act at the level of the Golgi apparatus or that of the centrosome. In complex with AKAP9, recruits CAMSAP2 to the Golgi apparatus and tethers non-centrosomal minus-end microtubules to the Golgi, an important step for polarized cell movement. In complex with AKAP9, EB1/MAPRE1 and CDK5RAP2, contributes to microtubules nucleation and extension from the centrosome to the cell periphery, a crucial process for directed cell migration, mitotic spindle orientation and cell-cycle progression. The polypeptide is Myomegalin (Pde4dip) (Rattus norvegicus (Rat)).